The primary structure comprises 458 residues: Tetracycline resistance protein (458 aa).

12 helical membrane passes run 12-33 (HNQV…EMVL), 81-100 (LLLF…FVGH), 111-129 (FIQG…VVVA), 140-162 (AFGL…GGMV), 165-185 (YIHW…VPFL), 201-221 (MAGI…TTSY), 223-240 (FSFL…VQHI), 256-276 (VFFV…AGFV), 297-317 (GIIF…GLLV), 324-344 (YVLT…AFFI), 346-365 (AAPW…LSFT), and 432-451 (MLIL…LNVY).

Belongs to the major facilitator superfamily. TCR/Tet family.

The protein localises to the cell membrane. Resistance to tetracycline by an active tetracycline efflux. This is an energy-dependent process that decreases the accumulation of the antibiotic in whole cells. This protein functions as a metal-tetracycline/H(+) antiporter. This is Tetracycline resistance protein (tetB) from Bacillus subtilis (strain 168).